The primary structure comprises 60 residues: Large ribosomal subunit protein bL32 (60 aa).

The interval 1 to 23 (MAVPKRKKSKSRRNMHRSHHAIK) is disordered.

This sequence belongs to the bacterial ribosomal protein bL32 family.

The sequence is that of Large ribosomal subunit protein bL32 from Wolbachia pipientis subsp. Culex pipiens (strain wPip).